A 38-amino-acid polypeptide reads, in one-letter code: Photosystem II reaction center protein L (38 aa).

The helical transmembrane segment at 17 to 37 threads the bilayer; it reads SLYWGLLLIFVLAVLFSNYFF.

The protein belongs to the PsbL family. As to quaternary structure, PSII is composed of 1 copy each of membrane proteins PsbA, PsbB, PsbC, PsbD, PsbE, PsbF, PsbH, PsbI, PsbJ, PsbK, PsbL, PsbM, PsbT, PsbX, PsbY, PsbZ, Psb30/Ycf12, at least 3 peripheral proteins of the oxygen-evolving complex and a large number of cofactors. It forms dimeric complexes.

Its subcellular location is the plastid. It localises to the chloroplast thylakoid membrane. Functionally, one of the components of the core complex of photosystem II (PSII). PSII is a light-driven water:plastoquinone oxidoreductase that uses light energy to abstract electrons from H(2)O, generating O(2) and a proton gradient subsequently used for ATP formation. It consists of a core antenna complex that captures photons, and an electron transfer chain that converts photonic excitation into a charge separation. This subunit is found at the monomer-monomer interface and is required for correct PSII assembly and/or dimerization. This chain is Photosystem II reaction center protein L, found in Huperzia lucidula (Shining clubmoss).